Here is a 243-residue protein sequence, read N- to C-terminus: UPF0246 protein SpyM51747 (243 aa).

Belongs to the UPF0246 family.

The chain is UPF0246 protein SpyM51747 from Streptococcus pyogenes serotype M5 (strain Manfredo).